Consider the following 73-residue polypeptide: Venom peptide La1 (73 aa).

Residue Lys-73 is modified to Lysine amide.

The protein belongs to the scorpion La1-like peptide family. Post-translationally, contains 4 disulfide bonds. In terms of tissue distribution, expressed by the venom gland.

It localises to the secreted. Functionally, not toxic to insect. The polypeptide is Venom peptide La1 (Liocheles australasiae (Dwarf wood scorpion)).